The following is a 612-amino-acid chain: Dihydroxy-acid dehydratase (612 aa).

Asp-81 is a Mg(2+) binding site. Cys-122 is a [2Fe-2S] cluster binding site. Mg(2+)-binding residues include Asp-123 and Lys-124. Position 124 is an N6-carboxylysine (Lys-124). Cys-193 lines the [2Fe-2S] cluster pocket. Glu-489 contributes to the Mg(2+) binding site. Catalysis depends on Ser-515, which acts as the Proton acceptor.

The protein belongs to the IlvD/Edd family. As to quaternary structure, homodimer. [2Fe-2S] cluster serves as cofactor. The cofactor is Mg(2+).

The catalysed reaction is (2R)-2,3-dihydroxy-3-methylbutanoate = 3-methyl-2-oxobutanoate + H2O. It catalyses the reaction (2R,3R)-2,3-dihydroxy-3-methylpentanoate = (S)-3-methyl-2-oxopentanoate + H2O. It functions in the pathway amino-acid biosynthesis; L-isoleucine biosynthesis; L-isoleucine from 2-oxobutanoate: step 3/4. Its pathway is amino-acid biosynthesis; L-valine biosynthesis; L-valine from pyruvate: step 3/4. Its function is as follows. Functions in the biosynthesis of branched-chain amino acids. Catalyzes the dehydration of (2R,3R)-2,3-dihydroxy-3-methylpentanoate (2,3-dihydroxy-3-methylvalerate) into 2-oxo-3-methylpentanoate (2-oxo-3-methylvalerate) and of (2R)-2,3-dihydroxy-3-methylbutanoate (2,3-dihydroxyisovalerate) into 2-oxo-3-methylbutanoate (2-oxoisovalerate), the penultimate precursor to L-isoleucine and L-valine, respectively. This Azotobacter vinelandii (strain DJ / ATCC BAA-1303) protein is Dihydroxy-acid dehydratase.